The following is an 81-amino-acid chain: MGMPSGQELLIILAIVVLLFGAKKIPELAKGIGKGIKNFKAEMKNEDDDTEVKSASTEAPKKVESAEEVASKESSKTPTQA.

A helical transmembrane segment spans residues 1 to 21 (MGMPSGQELLIILAIVVLLFG). Residues 45–81 (NEDDDTEVKSASTEAPKKVESAEEVASKESSKTPTQA) form a disordered region. Positions 59 to 75 (APKKVESAEEVASKESS) are enriched in basic and acidic residues.

Belongs to the TatA/E family. In terms of assembly, the Tat system comprises two distinct complexes: a TatABC complex, containing multiple copies of TatA, TatB and TatC subunits, and a separate TatA complex, containing only TatA subunits. Substrates initially bind to the TatABC complex, which probably triggers association of the separate TatA complex to form the active translocon.

It localises to the cell inner membrane. Its function is as follows. Part of the twin-arginine translocation (Tat) system that transports large folded proteins containing a characteristic twin-arginine motif in their signal peptide across membranes. TatA could form the protein-conducting channel of the Tat system. This chain is Sec-independent protein translocase protein TatA, found in Sulfurimonas denitrificans (strain ATCC 33889 / DSM 1251) (Thiomicrospira denitrificans (strain ATCC 33889 / DSM 1251)).